We begin with the raw amino-acid sequence, 789 residues long: Endonuclease MutS2 (789 aa).

Position 334 to 341 (334 to 341) interacts with ATP; the sequence is GPNTGGKT. The tract at residues 690 to 714 is disordered; the sequence is PEKDIQQSGTGKIMKSKTGDTKSEV. The Smr domain maps to 714-789; that stretch reads VDVRGKNLEE…GMGVTIVELK (76 aa).

Belongs to the DNA mismatch repair MutS family. MutS2 subfamily. In terms of assembly, homodimer. Binds to stalled ribosomes, contacting rRNA.

Functionally, endonuclease that is involved in the suppression of homologous recombination and thus may have a key role in the control of bacterial genetic diversity. Acts as a ribosome collision sensor, splitting the ribosome into its 2 subunits. Detects stalled/collided 70S ribosomes which it binds and splits by an ATP-hydrolysis driven conformational change. Acts upstream of the ribosome quality control system (RQC), a ribosome-associated complex that mediates the extraction of incompletely synthesized nascent chains from stalled ribosomes and their subsequent degradation. Probably generates substrates for RQC. In Alkaliphilus metalliredigens (strain QYMF), this protein is Endonuclease MutS2.